We begin with the raw amino-acid sequence, 85 residues long: MSDGGKTKTTVEIYGQSYTIIGQETKMHMRHVASIVDDKMREINEKNPYLDINKLAVLTAVNVVHDYLKLKEQYEKLEIQLKEKE.

A coiled-coil region spans residues 60–85; it reads AVNVVHDYLKLKEQYEKLEIQLKEKE.

Belongs to the ZapA family. Type 2 subfamily. In terms of assembly, homodimer. Interacts with FtsZ.

It localises to the cytoplasm. In terms of biological role, activator of cell division through the inhibition of FtsZ GTPase activity, therefore promoting FtsZ assembly into bundles of protofilaments necessary for the formation of the division Z ring. It is recruited early at mid-cell but it is not essential for cell division. This is Cell division protein ZapA from Bacillus pumilus (strain SAFR-032).